A 154-amino-acid polypeptide reads, in one-letter code: Large ribosomal subunit protein uL13 (154 aa).

It belongs to the universal ribosomal protein uL13 family. As to quaternary structure, part of the 50S ribosomal subunit.

This protein is one of the early assembly proteins of the 50S ribosomal subunit, although it is not seen to bind rRNA by itself. It is important during the early stages of 50S assembly. The protein is Large ribosomal subunit protein uL13 of Rhodospirillum rubrum (strain ATCC 11170 / ATH 1.1.1 / DSM 467 / LMG 4362 / NCIMB 8255 / S1).